The sequence spans 276 residues: Elongation factor Ts (276 aa).

An involved in Mg(2+) ion dislocation from EF-Tu region spans residues Thr-81–Val-84.

The protein belongs to the EF-Ts family.

It localises to the cytoplasm. Functionally, associates with the EF-Tu.GDP complex and induces the exchange of GDP to GTP. It remains bound to the aminoacyl-tRNA.EF-Tu.GTP complex up to the GTP hydrolysis stage on the ribosome. The sequence is that of Elongation factor Ts from Leifsonia xyli subsp. xyli (strain CTCB07).